The primary structure comprises 72 residues: Translation initiation factor IF-1 (72 aa).

The S1-like domain maps to 1-72 (MAKEESIEIE…SKGRITYRYK (72 aa)).

The protein belongs to the IF-1 family. In terms of assembly, component of the 30S ribosomal translation pre-initiation complex which assembles on the 30S ribosome in the order IF-2 and IF-3, IF-1 and N-formylmethionyl-tRNA(fMet); mRNA recruitment can occur at any time during PIC assembly.

The protein localises to the cytoplasm. Its function is as follows. One of the essential components for the initiation of protein synthesis. Stabilizes the binding of IF-2 and IF-3 on the 30S subunit to which N-formylmethionyl-tRNA(fMet) subsequently binds. Helps modulate mRNA selection, yielding the 30S pre-initiation complex (PIC). Upon addition of the 50S ribosomal subunit IF-1, IF-2 and IF-3 are released leaving the mature 70S translation initiation complex. This Chlorobium phaeovibrioides (strain DSM 265 / 1930) (Prosthecochloris vibrioformis (strain DSM 265)) protein is Translation initiation factor IF-1.